The sequence spans 215 residues: UPF0323 lipoprotein HP_0232 (215 aa).

A signal peptide spans 1–27 (MKKPYRKISDYAIVGGLSALVMVSIVG). Cys-28 carries N-palmitoyl cysteine lipidation. Cys-28 is lipidated: S-diacylglycerol cysteine. A compositionally biased stretch (polar residues) spans 158–169 (QRTYKSPQAYQR). Positions 158–215 (QRTYKSPQAYQRSQNSFSKSAPSASSMGGASKGQSGFFGSSRPTSSPAVSSGTRGFNS) are disordered. Over residues 170–208 (SQNSFSKSAPSASSMGGASKGQSGFFGSSRPTSSPAVSS) the composition is skewed to low complexity.

The protein belongs to the UPF0323 family.

The protein localises to the cell membrane. The polypeptide is UPF0323 lipoprotein HP_0232 (Helicobacter pylori (strain ATCC 700392 / 26695) (Campylobacter pylori)).